A 134-amino-acid chain; its full sequence is Small ribosomal subunit protein uS8c (134 aa).

Belongs to the universal ribosomal protein uS8 family. As to quaternary structure, part of the 30S ribosomal subunit.

It localises to the plastid. The protein localises to the chloroplast. One of the primary rRNA binding proteins, it binds directly to 16S rRNA central domain where it helps coordinate assembly of the platform of the 30S subunit. The polypeptide is Small ribosomal subunit protein uS8c (rps8) (Gossypium hirsutum (Upland cotton)).